The following is a 275-amino-acid chain: Mitochondrial outer membrane porin (275 aa).

The protein belongs to the eukaryotic mitochondrial porin (TC 1.B.8.1) family.

The protein localises to the mitochondrion outer membrane. Forms a channel through the cell membrane that allows diffusion of small hydrophilic molecules. The channel adopts an open conformation at low or zero membrane potential and a closed conformation at potentials above 30-40 mV. The open state has a weak anion selectivity whereas the closed state is cation-selective. The sequence is that of Mitochondrial outer membrane porin (VDAC1) from Triticum aestivum (Wheat).